The primary structure comprises 204 residues: Urease accessory protein UreG (204 aa).

A GTP-binding site is contributed by 11–18 (GPVGAGKT).

It belongs to the SIMIBI class G3E GTPase family. UreG subfamily. Homodimer. UreD, UreF and UreG form a complex that acts as a GTP-hydrolysis-dependent molecular chaperone, activating the urease apoprotein by helping to assemble the nickel containing metallocenter of UreC. The UreE protein probably delivers the nickel.

It is found in the cytoplasm. Its function is as follows. Facilitates the functional incorporation of the urease nickel metallocenter. This process requires GTP hydrolysis, probably effectuated by UreG. The chain is Urease accessory protein UreG from Staphylococcus epidermidis (strain ATCC 35984 / DSM 28319 / BCRC 17069 / CCUG 31568 / BM 3577 / RP62A).